We begin with the raw amino-acid sequence, 252 residues long: 5'-nucleotidase SurE (252 aa).

D8, D9, S39, and N91 together coordinate a divalent metal cation.

The protein belongs to the SurE nucleotidase family. A divalent metal cation is required as a cofactor.

The protein resides in the cytoplasm. It catalyses the reaction a ribonucleoside 5'-phosphate + H2O = a ribonucleoside + phosphate. In terms of biological role, nucleotidase that shows phosphatase activity on nucleoside 5'-monophosphates. This chain is 5'-nucleotidase SurE, found in Bordetella bronchiseptica (strain ATCC BAA-588 / NCTC 13252 / RB50) (Alcaligenes bronchisepticus).